The primary structure comprises 347 residues: KIN17-like protein KLP (347 aa).

The short motif at 222-225 (KRKR) is the Nuclear localization signal (NLS) element.

It belongs to the KIN17 family.

Its subcellular location is the cytoplasm. The protein resides in the nucleus. Its function is as follows. May act as repressor of root growth during copper excess and of hypocotyl growth in the dark. In Arabidopsis thaliana (Mouse-ear cress), this protein is KIN17-like protein KLP.